A 352-amino-acid polypeptide reads, in one-letter code: D-arabitol-phosphate dehydrogenase (352 aa).

Residues Cys-43, His-65, Cys-96, Cys-99, Cys-102, Cys-110, and Glu-151 each contribute to the Mn(2+) site.

Belongs to the zinc-containing alcohol dehydrogenase family. Homotetramer. Mn(2+) serves as cofactor.

It carries out the reaction D-arabinitol 1-phosphate + NAD(+) = D-xylulose 5-phosphate + NADH + H(+). Its activity is regulated as follows. Inhibited by EDTA, 4-hydroxymercuribenzoic acid (PHMB), mercury and zinc ions at a concentration of 2 mM. Involved in the arabitol catabolism via the arabitol phosphate route. Catalyzes only the transformation of D-arabitol 1-phosphate (Arb1P) and D-arabitol 5-phosphate (Arb5P) into D-xylulose 5-phosphate (Xlu5P) and ribulose 5-phosphate, respectively. It can use both NAD and NADP. The sequence is that of D-arabitol-phosphate dehydrogenase from Enterococcus avium (Streptococcus avium).